The chain runs to 215 residues: NAD(P)H-hydrate epimerase (215 aa).

The region spanning alanine 10 to valine 211 is the YjeF N-terminal domain. Asparagine 58–aspartate 62 is a (6S)-NADPHX binding site. Asparagine 59 and aspartate 121 together coordinate K(+). (6S)-NADPHX contacts are provided by residues glycine 125 to aspartate 131 and aspartate 154. A K(+)-binding site is contributed by serine 157.

Belongs to the NnrE/AIBP family. The cofactor is K(+).

The catalysed reaction is (6R)-NADHX = (6S)-NADHX. It carries out the reaction (6R)-NADPHX = (6S)-NADPHX. Functionally, catalyzes the epimerization of the S- and R-forms of NAD(P)HX, a damaged form of NAD(P)H that is a result of enzymatic or heat-dependent hydration. This is a prerequisite for the S-specific NAD(P)H-hydrate dehydratase to allow the repair of both epimers of NAD(P)HX. This chain is NAD(P)H-hydrate epimerase, found in Levilactobacillus brevis (strain ATCC 367 / BCRC 12310 / CIP 105137 / JCM 1170 / LMG 11437 / NCIMB 947 / NCTC 947) (Lactobacillus brevis).